Consider the following 133-residue polypeptide: Cytochrome b5 (133 aa).

In terms of domain architecture, Cytochrome b5 heme-binding spans 4 to 86; the sequence is EKEYILDEIS…LKNYLVGNFK (83 aa). Heme contacts are provided by histidine 45 and histidine 69. The chain crosses the membrane as a helical span at residues 108 to 128; it reads SGTGIMLIVLMALFAIAYGYY.

This sequence belongs to the cytochrome b5 family. Interacts with alternative squalene epoxidase PHATRDRAFT_45494.

It localises to the endoplasmic reticulum membrane. Its function is as follows. Hemoprotein that functions as an electron carrier for membrane bound monooxygenases involved in sterol biosynthesis. The chain is Cytochrome b5 from Phaeodactylum tricornutum (strain CCAP 1055/1).